A 156-amino-acid chain; its full sequence is Snaclec A15 (156 aa).

The N-terminal stretch at 1 to 23 (MGRFIFVRFGLLVVFLSLSGTGA) is a signal peptide. Cystine bridges form between Cys-27–Cys-38, Cys-55–Cys-152, and Cys-127–Cys-144. The C-type lectin domain maps to 34–153 (YDQHCYKAFD…CGDDYPFVCK (120 aa)). Asn-141 carries an N-linked (GlcNAc...) asparagine glycan.

It belongs to the snaclec family. In terms of assembly, heterodimer; disulfide-linked. In terms of tissue distribution, expressed by the venom gland.

The protein resides in the secreted. Functionally, interferes with one step of hemostasis (modulation of platelet aggregation, or coagulation cascade, for example). This is Snaclec A15 from Macrovipera lebetinus (Levantine viper).